The primary structure comprises 201 residues: MASRSAGTLLTEFNAAYVPPGLMPGYQGHVPTVAFSFGAPYGTTTLKYFQDHRNRAMEKSHTPFSQGGHFPTIFSTNPNLLLMERASTRDRWLHKPSYTRFNLDSHRSTELTNFYQMVQQHRKYYQDKTGTVPRVPYFAMPVREPERYPLPTVLPPLCPKKKWHLLRLAPENLKTYQTFPSGKRVSPQERKKRDCYFEFRA.

Belongs to the CIMIP2 family. As to quaternary structure, microtubule inner protein component of sperm flagellar doublet microtubules. Expressed in airway epithelial cells.

The protein resides in the cytoplasm. It is found in the cytoskeleton. Its subcellular location is the cilium axoneme. It localises to the flagellum axoneme. Its function is as follows. Microtubule inner protein (MIP) part of the dynein-decorated doublet microtubules (DMTs) in cilia axoneme, which is required for motile cilia beating. Binds to the intra-tubulin interfaces. The polypeptide is Ciliary microtubule inner protein 2C (Homo sapiens (Human)).